A 262-amino-acid chain; its full sequence is Acyl-[acyl-carrier-protein]--UDP-N-acetylglucosamine O-acyltransferase (262 aa).

It belongs to the transferase hexapeptide repeat family. LpxA subfamily. Homotrimer.

The protein resides in the cytoplasm. The catalysed reaction is a (3R)-hydroxyacyl-[ACP] + UDP-N-acetyl-alpha-D-glucosamine = a UDP-3-O-[(3R)-3-hydroxyacyl]-N-acetyl-alpha-D-glucosamine + holo-[ACP]. The protein operates within glycolipid biosynthesis; lipid IV(A) biosynthesis; lipid IV(A) from (3R)-3-hydroxytetradecanoyl-[acyl-carrier-protein] and UDP-N-acetyl-alpha-D-glucosamine: step 1/6. Involved in the biosynthesis of lipid A, a phosphorylated glycolipid that anchors the lipopolysaccharide to the outer membrane of the cell. The chain is Acyl-[acyl-carrier-protein]--UDP-N-acetylglucosamine O-acyltransferase from Paraburkholderia xenovorans (strain LB400).